A 502-amino-acid polypeptide reads, in one-letter code: Phenylalanine--tRNA ligase alpha subunit (502 aa).

L-phenylalanine is bound by residues T339, 382–384 (QIE), and Y422. E424 lines the Mg(2+) pocket. An L-phenylalanine-binding site is contributed by F448.

It belongs to the class-II aminoacyl-tRNA synthetase family. Phe-tRNA synthetase alpha subunit type 2 subfamily. As to quaternary structure, tetramer of two alpha and two beta subunits. Mg(2+) is required as a cofactor.

It is found in the cytoplasm. The enzyme catalyses tRNA(Phe) + L-phenylalanine + ATP = L-phenylalanyl-tRNA(Phe) + AMP + diphosphate + H(+). This Halobacterium salinarum (strain ATCC 29341 / DSM 671 / R1) protein is Phenylalanine--tRNA ligase alpha subunit.